The following is a 378-amino-acid chain: Protein RecA (378 aa).

The disordered stretch occupies residues 1–20 (MAAKKDKSVPDSKITDKEGK). An ATP-binding site is contributed by 80–87 (GAESSGKT). Residues 344 to 378 (GPVDKKKKKSKKEASSDDTDDENLEIDDAIDENND) form a disordered region. Positions 359 to 378 (SDDTDDENLEIDDAIDENND) are enriched in acidic residues.

It belongs to the RecA family.

The protein localises to the cytoplasm. Its function is as follows. Can catalyze the hydrolysis of ATP in the presence of single-stranded DNA, the ATP-dependent uptake of single-stranded DNA by duplex DNA, and the ATP-dependent hybridization of homologous single-stranded DNAs. It interacts with LexA causing its activation and leading to its autocatalytic cleavage. This is Protein RecA from Fusobacterium nucleatum subsp. nucleatum (strain ATCC 25586 / DSM 15643 / BCRC 10681 / CIP 101130 / JCM 8532 / KCTC 2640 / LMG 13131 / VPI 4355).